Reading from the N-terminus, the 316-residue chain is tRNA dimethylallyltransferase (316 aa).

Residue 17 to 24 coordinates ATP; it reads GPTASGKT. 19 to 24 contributes to the substrate binding site; sequence TASGKT. Interaction with substrate tRNA stretches follow at residues 42 to 45, 166 to 170, 247 to 252, and 280 to 287; these read DSAL, QRLSR, RCVGYR, and KRQITWLR.

Belongs to the IPP transferase family. As to quaternary structure, monomer. The cofactor is Mg(2+).

The catalysed reaction is adenosine(37) in tRNA + dimethylallyl diphosphate = N(6)-dimethylallyladenosine(37) in tRNA + diphosphate. Its function is as follows. Catalyzes the transfer of a dimethylallyl group onto the adenine at position 37 in tRNAs that read codons beginning with uridine, leading to the formation of N6-(dimethylallyl)adenosine (i(6)A). In Escherichia coli O6:K15:H31 (strain 536 / UPEC), this protein is tRNA dimethylallyltransferase.